The following is a 51-amino-acid chain: Large ribosomal subunit protein eL39 (51 aa).

The protein belongs to the eukaryotic ribosomal protein eL39 family.

The chain is Large ribosomal subunit protein eL39 (rpl39e) from Aeropyrum pernix (strain ATCC 700893 / DSM 11879 / JCM 9820 / NBRC 100138 / K1).